A 443-amino-acid polypeptide reads, in one-letter code: Amino-acid acetyltransferase (443 aa).

In terms of domain architecture, N-acetyltransferase spans 296 to 443 (EQIRRATIND…RSKVLMADLG (148 aa)).

The protein belongs to the acetyltransferase family. ArgA subfamily. In terms of assembly, homohexamer.

The protein localises to the cytoplasm. It carries out the reaction L-glutamate + acetyl-CoA = N-acetyl-L-glutamate + CoA + H(+). The protein operates within amino-acid biosynthesis; L-arginine biosynthesis; N(2)-acetyl-L-ornithine from L-glutamate: step 1/4. The sequence is that of Amino-acid acetyltransferase (argA) from Salmonella typhi.